Consider the following 64-residue polypeptide: U9-ctenitoxin-Pr1a (64 aa).

5 disulfides stabilise this stretch: cysteine 3–cysteine 15, cysteine 9–cysteine 24, cysteine 14–cysteine 47, cysteine 34–cysteine 55, and cysteine 49–cysteine 61.

As to expression, expressed by the venom gland.

The protein localises to the secreted. Functionally, non-toxic to mice and insects. This Phoneutria reidyi (Brazilian Amazonian armed spider) protein is U9-ctenitoxin-Pr1a.